A 314-amino-acid polypeptide reads, in one-letter code: Transmembrane protein 248 (314 aa).

A helical transmembrane segment spans residues 21 to 41; that stretch reads VVFMISVSAMAIAFLTLGYFF. Residues 78–106 are disordered; that stretch reads LSNDTTTPESTMTVGQARSSTQPPQSLEE. Positions 80 to 105 are enriched in polar residues; the sequence is NDTTTPESTMTVGQARSSTQPPQSLE. 3 helical membrane passes run 179-199, 236-258, and 270-290; these read QAVFTACMTLTAAPGVFPVTV, FWCYKGAIGKVYHALNPKLTVVV, and LMHTSYFLFVMVITMFCYAVI.

The protein belongs to the TMEM248 family.

It is found in the membrane. In Mus musculus (Mouse), this protein is Transmembrane protein 248 (Tmem248).